Reading from the N-terminus, the 511-residue chain is Histidine ammonia-lyase (511 aa).

Residues A142–G144 constitute a cross-link (5-imidazolinone (Ala-Gly)). A 2,3-didehydroalanine (Ser) modification is found at S143.

The protein belongs to the PAL/histidase family. Contains an active site 4-methylidene-imidazol-5-one (MIO), which is formed autocatalytically by cyclization and dehydration of residues Ala-Ser-Gly.

It is found in the cytoplasm. It catalyses the reaction L-histidine = trans-urocanate + NH4(+). It functions in the pathway amino-acid degradation; L-histidine degradation into L-glutamate; N-formimidoyl-L-glutamate from L-histidine: step 1/3. The chain is Histidine ammonia-lyase from Chelativorans sp. (strain BNC1).